The sequence spans 605 residues: Probable potassium transport system protein Kup 2 (605 aa).

12 helical membrane-spanning segments follow: residues 17–37 (GLVF…IMTL), 45–65 (VLGI…VEYA), 96–116 (MAFA…DGVI), 139–159 (AQGG…IFQF), 169–189 (FGPI…VSII), 211–231 (GLAG…GEAL), 246–266 (AWYF…AFIL), 286–306 (LYIP…QALI), 338–358 (IYIG…MILF), 367–387 (AYGL…TMIF), 394–414 (WKVP…TANL), and 417–437 (LPHG…IMVI).

Belongs to the HAK/KUP transporter (TC 2.A.72) family.

Its subcellular location is the cell inner membrane. It catalyses the reaction K(+)(in) + H(+)(in) = K(+)(out) + H(+)(out). Its function is as follows. Transport of potassium into the cell. Likely operates as a K(+):H(+) symporter. This Geobacter sulfurreducens (strain ATCC 51573 / DSM 12127 / PCA) protein is Probable potassium transport system protein Kup 2.